The sequence spans 294 residues: Endonuclease G, mitochondrial (294 aa).

Residues 1–44 constitute a mitochondrion transit peptide; it reads MRALRAGLTLALGAGLGAAAEHWRRREGKAPGLLGRVPLLPVVA. Position 125 is a phosphothreonine (threonine 125). Histidine 138 acts as the Proton acceptor in catalysis. Residue asparagine 169 coordinates Mg(2+). Residues 283 to 293 are essential for deoxyribonuclease activity; that stretch reads AGNLKAITAGS.

It belongs to the DNA/RNA non-specific endonuclease family. As to quaternary structure, homodimer; disulfide-linked. Homodimerization is essential for its activity. Interacts with YWHAG. It depends on Mg(2+) as a cofactor. Post-translationally, GSK3-beta-mediated phosphorylation at Thr-125 is necessary for its interaction with YWHAG and the induction of autophagy.

It is found in the mitochondrion. Its function is as follows. Endonuclease that preferentially catalyzes the cleavage of double-stranded 5-hydroxymethylcytosine (5hmC)-modified DNA. The 5hmC-modified nucleotide does not increase the binding affinity, but instead increases the efficiency of cutting and specifies the site of cleavage for the modified DNAs. Shows significantly higher affinity for four-stranded Holliday junction over duplex and single-stranded DNAs. Promotes conservative recombination when the DNA is 5hmC-modified. Promotes autophagy through the suppression of mTOR by its phosphorylation-mediated interaction with YWHAG and its endonuclease activity-mediated DNA damage response. GSK3-beta mediated phosphorylation of ENDOG enhances its interaction with YWHAG, leading to the release of TSC2 and PIK3C3 from YWHAG resulting in mTOR pathway suppression and autophagy initiation. Promotes cleavage of mtDNA in response to oxidative and nitrosative stress, in turn inducing compensatory mtDNA replication. This Mus musculus (Mouse) protein is Endonuclease G, mitochondrial (Endog).